The following is a 204-amino-acid chain: Ribosomal RNA small subunit methyltransferase G (204 aa).

S-adenosyl-L-methionine is bound by residues Gly74, Leu79, 125-126 (AY), and Arg138.

This sequence belongs to the methyltransferase superfamily. RNA methyltransferase RsmG family.

Its subcellular location is the cytoplasm. Its function is as follows. Specifically methylates the N7 position of a guanine in 16S rRNA. The chain is Ribosomal RNA small subunit methyltransferase G from Brachyspira hyodysenteriae (strain ATCC 49526 / WA1).